The chain runs to 273 residues: Putative pyruvate, phosphate dikinase regulatory protein (273 aa).

149–156 (GPSRTSKT) contributes to the ADP binding site.

This sequence belongs to the pyruvate, phosphate/water dikinase regulatory protein family. PDRP subfamily.

The enzyme catalyses N(tele)-phospho-L-histidyl/L-threonyl-[pyruvate, phosphate dikinase] + ADP = N(tele)-phospho-L-histidyl/O-phospho-L-threonyl-[pyruvate, phosphate dikinase] + AMP + H(+). It catalyses the reaction N(tele)-phospho-L-histidyl/O-phospho-L-threonyl-[pyruvate, phosphate dikinase] + phosphate + H(+) = N(tele)-phospho-L-histidyl/L-threonyl-[pyruvate, phosphate dikinase] + diphosphate. In terms of biological role, bifunctional serine/threonine kinase and phosphorylase involved in the regulation of the pyruvate, phosphate dikinase (PPDK) by catalyzing its phosphorylation/dephosphorylation. In Rickettsia africae (strain ESF-5), this protein is Putative pyruvate, phosphate dikinase regulatory protein.